The following is a 280-amino-acid chain: Alpha-aminoadipate--LysW ligase LysX (280 aa).

Residues K89, K129, 133-139 (GSWGRLL), 169-180 (QEYVEKPGRDIR), R194, and N202 each bind ATP. The region spanning 93–276 (SVALAKAGLP…IPGEILKYAW (184 aa)) is the ATP-grasp domain. D237, E249, and N251 together coordinate Mg(2+). The N-[TS] motif that is essential for LysX substrate specificity signature appears at 258 to 259 (NS).

This sequence belongs to the RimK family. LysX subfamily. Homodimer. Requires Mg(2+) as cofactor.

The catalysed reaction is [amino-group carrier protein]-C-terminal-L-glutamate + L-2-aminoadipate + ATP = [amino-group carrier protein]-C-terminal-N-(1,4-dicarboxybutan-1-yl)-L-glutamine + ADP + phosphate + H(+). Its pathway is amino-acid biosynthesis; L-lysine biosynthesis via AAA pathway; L-lysine from L-alpha-aminoadipate (Thermus route): step 1/5. Functionally, catalyzes the ATP-dependent formation of a covalent bond between the amino group of alpha-aminoadipate (AAA) and the gamma-carboxyl group of the C-terminal glutamate residue in LysW. The polypeptide is Alpha-aminoadipate--LysW ligase LysX (lysX) (Thermus thermophilus (strain ATCC 27634 / DSM 579 / HB8)).